We begin with the raw amino-acid sequence, 1007 residues long: Kinesin-like protein KIN-14F (1007 aa).

Positions 41–187 (AARRNEAAGW…CVLALKSYGD (147 aa)) constitute a Calponin-homology (CH) domain. Positions 390-715 (SIRVYCRVRP…LKFAERVSTV (326 aa)) constitute a Kinesin motor domain. ATP is bound at residue 472 to 479 (GQTGSGKT). A coiled-coil region spans residues 718 to 748 (GAARLNKESGEVKELKEQIARLKSSLAMKDS). A compositionally biased stretch (basic and acidic residues) spans 885-904 (KQYLRNNSRKKDGNEFEQQR). 2 disordered regions span residues 885-924 (KQYLRNNSRKKDGNEFEQQRPRFYSTNTDDSDDIDIATSD) and 944-1007 (SENG…AGTK). The segment covering 963-1001 (TRTPLHSQIPSASRKTSNGNRSGRQPLSGSDSRRLSSNG) has biased composition (polar residues).

Belongs to the TRAFAC class myosin-kinesin ATPase superfamily. Kinesin family. KIN-14 subfamily.

In Oryza sativa subsp. japonica (Rice), this protein is Kinesin-like protein KIN-14F.